A 459-amino-acid polypeptide reads, in one-letter code: Cysteine--tRNA ligase (459 aa).

Cysteine 28 lines the Zn(2+) pocket. Residues 30–40 (VTIYDLCHIGH) carry the 'HIGH' region motif. Residues cysteine 209, histidine 234, and glutamate 238 each contribute to the Zn(2+) site. The short motif at 266 to 270 (KMSKS) is the 'KMSKS' region element. An ATP-binding site is contributed by lysine 269.

The protein belongs to the class-I aminoacyl-tRNA synthetase family. In terms of assembly, monomer. The cofactor is Zn(2+).

The protein resides in the cytoplasm. It carries out the reaction tRNA(Cys) + L-cysteine + ATP = L-cysteinyl-tRNA(Cys) + AMP + diphosphate. This chain is Cysteine--tRNA ligase, found in Shewanella loihica (strain ATCC BAA-1088 / PV-4).